Here is a 598-residue protein sequence, read N- to C-terminus: Elongation factor 4 (598 aa).

Positions 2–184 (NRIRNFSIIA…TIVAKLPPPK (183 aa)) constitute a tr-type G domain. Residues 14-19 (DHGKST) and 131-134 (NKID) contribute to the GTP site.

The protein belongs to the TRAFAC class translation factor GTPase superfamily. Classic translation factor GTPase family. LepA subfamily.

The protein localises to the cell inner membrane. The catalysed reaction is GTP + H2O = GDP + phosphate + H(+). Its function is as follows. Required for accurate and efficient protein synthesis under certain stress conditions. May act as a fidelity factor of the translation reaction, by catalyzing a one-codon backward translocation of tRNAs on improperly translocated ribosomes. Back-translocation proceeds from a post-translocation (POST) complex to a pre-translocation (PRE) complex, thus giving elongation factor G a second chance to translocate the tRNAs correctly. Binds to ribosomes in a GTP-dependent manner. The protein is Elongation factor 4 of Desulfosudis oleivorans (strain DSM 6200 / JCM 39069 / Hxd3) (Desulfococcus oleovorans).